The sequence spans 965 residues: Probable serine/threonine-protein kinase DDB_G0291516 (965 aa).

Positions 114 to 170 (KDSQKELLPSPQQLTPPTSLPSLPLLPLPQAPEQNEEQQLTQPPSPPSIPPPPPQKK) are disordered. 2 stretches are compositionally biased toward low complexity: residues 119–136 (ELLP…LPSL) and 144–155 (APEQNEEQQLTQ). Residues 156-168 (PPSPPSIPPPPPQ) show a composition bias toward pro residues. ANK repeat units follow at residues 271–301 (KGET…HMGI) and 310–339 (LNKN…PLKM). Residues 459-739 (IDFHTQIGSA…NVKAIKKEFL (281 aa)) form the Protein kinase domain. ATP contacts are provided by residues 465–473 (IGSAGNASV) and Lys486. Asp587 acts as the Proton acceptor in catalysis. Residues 653 to 673 (IYSLGIILWELVCVAMTGTYI) form a helical membrane-spanning segment. N-linked (GlcNAc...) asparagine glycans are attached at residues Asn760, Asn765, Asn905, Asn909, Asn910, Asn914, Asn934, and Asn938. The span at 881–940 (NINKNKNNNNNNNNNNNNNNNINNNNTFNNSTNNNSNDNINIPYDFNNNNNNNNNSCNNS) shows a compositional bias: low complexity. Positions 881–942 (NINKNKNNNN…NNNSCNNSKK (62 aa)) are disordered.

It belongs to the protein kinase superfamily. Ser/Thr protein kinase family.

The protein resides in the membrane. The catalysed reaction is L-seryl-[protein] + ATP = O-phospho-L-seryl-[protein] + ADP + H(+). It carries out the reaction L-threonyl-[protein] + ATP = O-phospho-L-threonyl-[protein] + ADP + H(+). This chain is Probable serine/threonine-protein kinase DDB_G0291516, found in Dictyostelium discoideum (Social amoeba).